Reading from the N-terminus, the 614-residue chain is Sulfite reductase [NADPH] flavoprotein alpha-component (614 aa).

Residues 79–217 (LTIIFASQTG…AATEWRKQVL (139 aa)) enclose the Flavodoxin-like domain. Residues 85-90 (SQTGNA), 132-135 (STNG), and 168-177 (LGDSSYQFFC) each bind FMN. One can recognise an FAD-binding FR-type domain in the interval 249–463 (EQPYTASLST…VEHNNNFKLP (215 aa)). Residues Thr337, Thr371, 401 to 404 (RLYS), 419 to 421 (TVG), Tyr425, and 434 to 437 (GGAS) contribute to the FAD site. Residues 534–535 (SR), 540–544 (KVYVQ), and Asp576 each bind NADP(+). Tyr614 is an FAD binding site.

Belongs to the NADPH-dependent sulphite reductase flavoprotein subunit CysJ family. It in the N-terminal section; belongs to the flavodoxin family. This sequence in the C-terminal section; belongs to the flavoprotein pyridine nucleotide cytochrome reductase family. As to quaternary structure, alpha(8)-beta(8). The alpha component is a flavoprotein, the beta component is a hemoprotein. It depends on FAD as a cofactor. Requires FMN as cofactor.

It catalyses the reaction hydrogen sulfide + 3 NADP(+) + 3 H2O = sulfite + 3 NADPH + 4 H(+). It participates in sulfur metabolism; hydrogen sulfide biosynthesis; hydrogen sulfide from sulfite (NADPH route): step 1/1. In terms of biological role, component of the sulfite reductase complex that catalyzes the 6-electron reduction of sulfite to sulfide. This is one of several activities required for the biosynthesis of L-cysteine from sulfate. The flavoprotein component catalyzes the electron flow from NADPH -&gt; FAD -&gt; FMN to the hemoprotein component. In Vibrio cholerae serotype O1 (strain ATCC 39315 / El Tor Inaba N16961), this protein is Sulfite reductase [NADPH] flavoprotein alpha-component.